The chain runs to 646 residues: Major capsid protein (646 aa).

Belongs to the NCLDV major capsid protein family. As to quaternary structure, homotrimer. The membrane-bound form, but not the cytosolic one, assembles into large complexes. Interacts with the minor capsid proteins M1249L and p17; these interactions form a rigid zipper structure that stabilizes the capsomers.

It localises to the virion. Its subcellular location is the host endoplasmic reticulum membrane. It is found in the host cytoplasm. The protein resides in the host cytosol. In terms of biological role, capsid protein that self-assembles to form the pseudo-hexameric capsomers of the icosahedral capsid. The capsid is constructed of 2760 pseudo-hexameric capsomers and 12 pentameric capsomers, with a T=277 symmetry, about 200 nm in diameter. The capsid encapsulates the DNA-containing nucleoid, the core shell and the inner membrane. Plays an essential role in virion assembly. Involved in virus attachment to the host cell. The sequence is that of Major capsid protein from Ornithodoros (relapsing fever ticks).